Here is a 562-residue protein sequence, read N- to C-terminus: Cytosolic invertase 1 (562 aa).

It belongs to the glycosyl hydrolase 100 family.

It is found in the cytoplasm. It localises to the cytosol. It carries out the reaction Hydrolysis of terminal non-reducing beta-D-fructofuranoside residues in beta-D-fructofuranosides.. In terms of biological role, cytosolic invertase that cleaves sucrose into glucose and fructose and is involved in the regulation of primary root elongation, lateral root formation, floral transition and pollen development. This is Cytosolic invertase 1 from Oryza sativa subsp. japonica (Rice).